A 223-amino-acid chain; its full sequence is UPF0502 protein Sbal223_2520 (223 aa).

The protein belongs to the UPF0502 family.

The polypeptide is UPF0502 protein Sbal223_2520 (Shewanella baltica (strain OS223)).